A 977-amino-acid polypeptide reads, in one-letter code: uncharacterized protein (977 aa).

The segment at 100–152 (ATSPLQQNGKSRDTEKPPSMKEKDLSSNSSSQHDKAFHERVDQGKNKSSTTKY) is disordered. 2 stretches are compositionally biased toward basic and acidic residues: residues 109–124 (KSRDTEKPPSMKEKDL) and 131–144 (QHDKAFHERVDQGK). Ser165 is modified (phosphoserine). 2 stretches are compositionally biased toward polar residues: residues 166-175 (PGQSVNSLKP) and 183-193 (STKSSTSSEMH). Positions 166–194 (PGQSVNSLKPNSGDEVPSTKSSTSSEMHT) are disordered.

This is an uncharacterized protein from Schizosaccharomyces pombe (strain 972 / ATCC 24843) (Fission yeast).